We begin with the raw amino-acid sequence, 260 residues long: Cytochrome c oxidase subunit 3 (260 aa).

Residues 1–15 (MTHQTHAYHMVNPSP) are Mitochondrial matrix-facing. Residues 16–34 (WPLTGALSALLMTSGLAMW) form a helical membrane-spanning segment. Topologically, residues 35–40 (FHFNST) are mitochondrial intermembrane. The chain crosses the membrane as a helical span at residues 41–66 (ALLMIGLTTNMLTMYQWWRDIIREST). The Mitochondrial matrix portion of the chain corresponds to 67–72 (FQGHHT). The helical transmembrane segment at 73–105 (PAVQKGLRYGMILFIISEVLFFTGFFWAFYHSS) threads the bilayer. Over 106–128 (LAPTPELGGCWPPTGIHPLNPLE) the chain is Mitochondrial intermembrane. The chain crosses the membrane as a helical span at residues 129–152 (VPLLNTSVLLASGVSITWAHHSLM). The Mitochondrial matrix portion of the chain corresponds to 153–155 (EGD). The helical transmembrane segment at 156-183 (RNHMLQALFITITLGVYFTLLQASEYYE) threads the bilayer. Residues 184 to 190 (APFTISD) are Mitochondrial intermembrane-facing. The helical transmembrane segment at 191-223 (GVYGSTFFVATGFHGLHVIIGSTFLIVCFFRQL) threads the bilayer. The Mitochondrial matrix segment spans residues 224-232 (KFHFTSNHH). A helical transmembrane segment spans residues 233 to 256 (FGFEAAAWYWHFVDVVWLFLYVSI). Over 257-260 (YWWG) the chain is Mitochondrial intermembrane.

The protein belongs to the cytochrome c oxidase subunit 3 family. Component of the cytochrome c oxidase (complex IV, CIV), a multisubunit enzyme composed of 14 subunits. The complex is composed of a catalytic core of 3 subunits MT-CO1, MT-CO2 and MT-CO3, encoded in the mitochondrial DNA, and 11 supernumerary subunits COX4I, COX5A, COX5B, COX6A, COX6B, COX6C, COX7A, COX7B, COX7C, COX8 and NDUFA4, which are encoded in the nuclear genome. The complex exists as a monomer or a dimer and forms supercomplexes (SCs) in the inner mitochondrial membrane with NADH-ubiquinone oxidoreductase (complex I, CI) and ubiquinol-cytochrome c oxidoreductase (cytochrome b-c1 complex, complex III, CIII), resulting in different assemblies (supercomplex SCI(1)III(2)IV(1) and megacomplex MCI(2)III(2)IV(2)).

It is found in the mitochondrion inner membrane. The enzyme catalyses 4 Fe(II)-[cytochrome c] + O2 + 8 H(+)(in) = 4 Fe(III)-[cytochrome c] + 2 H2O + 4 H(+)(out). In terms of biological role, component of the cytochrome c oxidase, the last enzyme in the mitochondrial electron transport chain which drives oxidative phosphorylation. The respiratory chain contains 3 multisubunit complexes succinate dehydrogenase (complex II, CII), ubiquinol-cytochrome c oxidoreductase (cytochrome b-c1 complex, complex III, CIII) and cytochrome c oxidase (complex IV, CIV), that cooperate to transfer electrons derived from NADH and succinate to molecular oxygen, creating an electrochemical gradient over the inner membrane that drives transmembrane transport and the ATP synthase. Cytochrome c oxidase is the component of the respiratory chain that catalyzes the reduction of oxygen to water. Electrons originating from reduced cytochrome c in the intermembrane space (IMS) are transferred via the dinuclear copper A center (CU(A)) of subunit 2 and heme A of subunit 1 to the active site in subunit 1, a binuclear center (BNC) formed by heme A3 and copper B (CU(B)). The BNC reduces molecular oxygen to 2 water molecules using 4 electrons from cytochrome c in the IMS and 4 protons from the mitochondrial matrix. The chain is Cytochrome c oxidase subunit 3 (MT-CO3) from Bos mutus grunniens (Wild yak).